Reading from the N-terminus, the 151-residue chain is Transcriptional regulator MraZ (151 aa).

SpoVT-AbrB domains are found at residues 5-52 (ANAV…PLDE) and 81-124 (AVDL…DEDA).

The protein belongs to the MraZ family. As to quaternary structure, forms oligomers.

It localises to the cytoplasm. It is found in the nucleoid. This chain is Transcriptional regulator MraZ, found in Pseudomonas putida (strain W619).